Here is a 197-residue protein sequence, read N- to C-terminus: SIGLEC family-like protein 1 (197 aa).

Residues 118-138 traverse the membrane as a helical segment; it reads GAIYAGIVIALLFLCLLPLIV. Residues 160–179 form a disordered region; it reads VRASQELEMSLKPEEPGKPV. Positions 162 to 176 are enriched in basic and acidic residues; sequence ASQELEMSLKPEEPG.

The protein resides in the membrane. This chain is SIGLEC family-like protein 1 (SIGLECL1), found in Homo sapiens (Human).